The following is a 576-amino-acid chain: Arginine--tRNA ligase (576 aa).

A 'HIGH' region motif is present at residues 122-132 (PNVAKEMHVGH).

This sequence belongs to the class-I aminoacyl-tRNA synthetase family. In terms of assembly, monomer.

It is found in the cytoplasm. The enzyme catalyses tRNA(Arg) + L-arginine + ATP = L-arginyl-tRNA(Arg) + AMP + diphosphate. This chain is Arginine--tRNA ligase, found in Pectobacterium atrosepticum (strain SCRI 1043 / ATCC BAA-672) (Erwinia carotovora subsp. atroseptica).